A 1990-amino-acid polypeptide reads, in one-letter code: Protein TANC2 (1990 aa).

Disordered stretches follow at residues 1 to 85 and 129 to 149; these read MFRN…SVDE and SPCS…PCST. 4 positions are modified to phosphoserine: Ser-169, Ser-238, Ser-294, and Ser-400. A disordered region spans residues 396–442; sequence IASDSPHASPKHVDANRELPLTQPPSAHSSITSGSCPGTPEMRRRQE. The segment covering 419 to 431 has biased composition (polar residues); sequence PPSAHSSITSGSC. ANK repeat units follow at residues 846–878, 884–913, 917–946, 950–979, 990–1019, 1033–1062, 1066–1095, 1099–1128, 1132–1161, 1165–1194, and 1198–1227; these read EGLS…NINY, NNAP…NVDA, SGLT…KVDH, NGQC…TMAG, AIQQ…KDEE, WGET…AVAQ, RGAV…DVNM, QGRT…SIAL, EGLT…ATDH, NGRT…MIEH, and SGMR…KIGP. TPR repeat units lie at residues 1244–1277, 1291–1324, and 1325–1358; these read LSKL…FPRE, VSLL…KPKS, and YEAY…CPNN. Disordered regions lie at residues 1372 to 1401, 1430 to 1586, and 1692 to 1718; these read CRQM…EPQH, EARP…KMAQ, and LTKE…PQIG. A phosphoserine mark is found at Ser-1442 and Ser-1458. The segment covering 1469–1498 has biased composition (polar residues); the sequence is RSSSSVGSPTRQTYQSTSPALSPTHQNSHY. Phosphoserine occurs at positions 1530 and 1545. A compositionally biased stretch (polar residues) spans 1553 to 1572; the sequence is VYRSQSGSPVRYQQETSVSQ. Residues Arg-1563 and Arg-1576 each carry the asymmetric dimethylarginine modification. Position 1579 is a phosphoserine (Ser-1579). Ser-1722 bears the Phosphoserine mark. Positions 1783-1798 are enriched in low complexity; the sequence is SPSSNSISSTSNLTPT. 2 disordered regions span residues 1783 to 1803 and 1821 to 1843; these read SPSS…RPSS and DELS…SRTT. Phosphoserine is present on residues Ser-1824 and Ser-1827. Asn-1928 carries an N-linked (GlcNAc...) asparagine glycan. Residues 1968 to 1990 form a disordered region; sequence SRDSRQGQTSPIKPKRPFVESNV.

This sequence belongs to the TANC family. Interacts with KIF1A; the interaction decreases in presence of calcium.

It localises to the cell projection. The protein resides in the dendritic spine. Functionally, scaffolding protein in the dendritic spines which acts as immobile postsynaptic posts able to recruit KIF1A-driven dense core vesicles to dendritic spines. The sequence is that of Protein TANC2 (TANC2) from Homo sapiens (Human).